The following is a 203-amino-acid chain: Molybdenum cofactor guanylyltransferase (203 aa).

Residues 12-14 (LAG), Lys25, Asn53, Asp71, and Asp101 contribute to the GTP site. Asp101 contributes to the Mg(2+) binding site.

It belongs to the MobA family. In terms of assembly, monomer. The cofactor is Mg(2+).

It is found in the cytoplasm. The catalysed reaction is Mo-molybdopterin + GTP + H(+) = Mo-molybdopterin guanine dinucleotide + diphosphate. Functionally, transfers a GMP moiety from GTP to Mo-molybdopterin (Mo-MPT) cofactor (Moco or molybdenum cofactor) to form Mo-molybdopterin guanine dinucleotide (Mo-MGD) cofactor. The polypeptide is Molybdenum cofactor guanylyltransferase (Cupriavidus metallidurans (strain ATCC 43123 / DSM 2839 / NBRC 102507 / CH34) (Ralstonia metallidurans)).